The following is a 506-amino-acid chain: MTEHLPASQVSFDENALIAERRAKLLALRAQGVAYPNDVKREHYAADVQAAFANVETWTAETLEASSHRVRMAGRLMAKRLMGKASFAQIQDESGRIQLLIQSNVLGEDSYAAFKVLDVGDIIAVEGGLTRTRTGELSVKVNVLRLLTKALRPLPDKWHGLTDVEQRYRQRYVDLIVTPESREIFIKRSKIIRALRTWLDARLFLEVETPMMHYIPGGAAAKPFVTYHNALDLELYLRVAPELYLKRLVVGGLERVYEINRNFRNEGVSTRHNPEFTMLELYEAYSTYHEVMDLAETMIRDTAQSVLGTTQVIWDGAQIDLGPIFRRWRMDEAVCHHNPEMSVAECTDRDALLLHCERLKIKVKSSYGWGRLLLSIFEATVEHTLIQPTFITDHPVEISPLARESDIESGYTDRFELFINGKEIANGFSELNDPEEQAMRFQKQVEAKEGGDDEAMYYDADYIRALEYGMAPTGGLGIGVDRLVMLLTGSTSIRDVLLFPYMRPER.

Mg(2+) contacts are provided by Glu-416 and Glu-423.

This sequence belongs to the class-II aminoacyl-tRNA synthetase family. As to quaternary structure, homodimer. Requires Mg(2+) as cofactor.

The protein localises to the cytoplasm. The enzyme catalyses tRNA(Lys) + L-lysine + ATP = L-lysyl-tRNA(Lys) + AMP + diphosphate. The polypeptide is Lysine--tRNA ligase (Xylella fastidiosa (strain M23)).